Consider the following 273-residue polypeptide: DnaJ homolog subfamily C member 27 (273 aa).

Residues 23–30 (GNAEVGKS), 71–75 (DMAGH), and 134–137 (NKVD) contribute to the GTP site. Residues 217–273 (DSWDMLGVKPGATREEVNKAYRKLAVLLHPDKCVAPGSEDAFKAVVNARTSLLKNIK) enclose the J domain.

Belongs to the small GTPase superfamily. Rab family.

The protein localises to the nucleus. In terms of biological role, GTPase possibly involved in regulation of the MEK/ERK pathway. The chain is DnaJ homolog subfamily C member 27 (dnajc27) from Danio rerio (Zebrafish).